Consider the following 37-residue polypeptide: QVYWRHPGEYGKEDVLICHVSNFHPPDITITLLKNGE.

Residues 11–37 form the Ig-like C1-type domain; the sequence is GKEDVLICHVSNFHPPDITITLLKNGE.

The protein belongs to the beta-2-microglobulin family. In terms of assembly, heterodimer of an alpha chain and a beta chain. Beta-2-microglobulin is the beta-chain of major histocompatibility complex class I molecules.

It is found in the secreted. Component of the class I major histocompatibility complex (MHC). Involved in the presentation of peptide antigens to the immune system. This Oreochromis niloticus (Nile tilapia) protein is Beta-2-microglobulin (b2m).